Reading from the N-terminus, the 113-residue chain is Large ribosomal subunit protein uL22 (113 aa).

The protein belongs to the universal ribosomal protein uL22 family. Part of the 50S ribosomal subunit.

Its function is as follows. This protein binds specifically to 23S rRNA; its binding is stimulated by other ribosomal proteins, e.g. L4, L17, and L20. It is important during the early stages of 50S assembly. It makes multiple contacts with different domains of the 23S rRNA in the assembled 50S subunit and ribosome. Functionally, the globular domain of the protein is located near the polypeptide exit tunnel on the outside of the subunit, while an extended beta-hairpin is found that lines the wall of the exit tunnel in the center of the 70S ribosome. The sequence is that of Large ribosomal subunit protein uL22 from Neorickettsia sennetsu (strain ATCC VR-367 / Miyayama) (Ehrlichia sennetsu).